A 119-amino-acid polypeptide reads, in one-letter code: Small ribosomal subunit protein uS13 (119 aa).

The interval 93 to 119 (RRGLPLRGQRTRSNARTRKGKRKPIRS) is disordered.

It belongs to the universal ribosomal protein uS13 family. As to quaternary structure, part of the 30S ribosomal subunit. Forms a loose heterodimer with protein S19. Forms two bridges to the 50S subunit in the 70S ribosome.

Its function is as follows. Located at the top of the head of the 30S subunit, it contacts several helices of the 16S rRNA. In the 70S ribosome it contacts the 23S rRNA (bridge B1a) and protein L5 of the 50S subunit (bridge B1b), connecting the 2 subunits; these bridges are implicated in subunit movement. Contacts the tRNAs in the A and P-sites. The sequence is that of Small ribosomal subunit protein uS13 from Coxiella burnetii (strain RSA 493 / Nine Mile phase I).